The following is a 122-amino-acid chain: UPF0102 protein Gmet_2864 (122 aa).

It belongs to the UPF0102 family.

This Geobacter metallireducens (strain ATCC 53774 / DSM 7210 / GS-15) protein is UPF0102 protein Gmet_2864.